The following is a 190-amino-acid chain: Elongation factor P (190 aa).

This sequence belongs to the elongation factor P family.

The protein resides in the cytoplasm. It participates in protein biosynthesis; polypeptide chain elongation. Involved in peptide bond synthesis. Stimulates efficient translation and peptide-bond synthesis on native or reconstituted 70S ribosomes in vitro. Probably functions indirectly by altering the affinity of the ribosome for aminoacyl-tRNA, thus increasing their reactivity as acceptors for peptidyl transferase. The polypeptide is Elongation factor P (efp) (Mycoplasma genitalium (strain ATCC 33530 / DSM 19775 / NCTC 10195 / G37) (Mycoplasmoides genitalium)).